Reading from the N-terminus, the 444-residue chain is Methylenetetrahydrofolate--tRNA-(uracil-5-)-methyltransferase TrmFO (444 aa).

10–15 (GAGLAG) is an FAD binding site.

It belongs to the MnmG family. TrmFO subfamily. The cofactor is FAD.

The protein resides in the cytoplasm. The enzyme catalyses uridine(54) in tRNA + (6R)-5,10-methylene-5,6,7,8-tetrahydrofolate + NADH + H(+) = 5-methyluridine(54) in tRNA + (6S)-5,6,7,8-tetrahydrofolate + NAD(+). The catalysed reaction is uridine(54) in tRNA + (6R)-5,10-methylene-5,6,7,8-tetrahydrofolate + NADPH + H(+) = 5-methyluridine(54) in tRNA + (6S)-5,6,7,8-tetrahydrofolate + NADP(+). Catalyzes the folate-dependent formation of 5-methyl-uridine at position 54 (M-5-U54) in all tRNAs. This Streptococcus gordonii (strain Challis / ATCC 35105 / BCRC 15272 / CH1 / DL1 / V288) protein is Methylenetetrahydrofolate--tRNA-(uracil-5-)-methyltransferase TrmFO.